The sequence spans 470 residues: L-fuculokinase (470 aa).

It belongs to the FGGY kinase family. A divalent metal cation is required as a cofactor.

The catalysed reaction is L-fuculose + ATP = L-fuculose 1-phosphate + ADP + H(+). It participates in carbohydrate degradation; L-fucose degradation; L-lactaldehyde and glycerone phosphate from L-fucose: step 2/3. In terms of biological role, catalyzes the phosphorylation of L-fuculose. In Haemophilus influenzae (strain ATCC 51907 / DSM 11121 / KW20 / Rd), this protein is L-fuculokinase.